Here is a 758-residue protein sequence, read N- to C-terminus: Vitamin K-dependent gamma-carboxylase (758 aa).

The segment at 1 to 22 (MAVSAGSARTSPSSDKVQKDKA) is disordered. A2 bears the N-acetylalanine mark. The Cytoplasmic segment spans residues 2 to 60 (AVSAGSARTSPSSDKVQKDKAELISGPRQDSRIGKLLGFEWTDLSSWRRLVTLLNRPTD). Residues 61–81 (PASLAVFRFLFGFLMVLDIPQ) traverse the membrane as a helical segment. Topologically, residues 82–113 (ERGLSSLDRKYLDGLDVCRFPLLDALRPLPLD) are lumenal. Cysteines 99 and 450 form a disulfide. A helical transmembrane segment spans residues 114–134 (WMYLVYTIMFLGALGMMLGLC). Residues 135–136 (YR) lie on the Cytoplasmic side of the membrane. A helical membrane pass occupies residues 137-157 (ISCVLFLLPYWYVFLLDKTSW). At 158-292 (NNHSYLYGLL…VSYFHCMNSQ (135 aa)) the chain is on the lumenal side. The active-site Proton acceptor is K218. A helical transmembrane segment spans residues 293 to 313 (LFSIGMFSYVMLASSPLFCSP). Residues 314–361 (EWPRKLVSYCPRRLQQLLPLKAAPQPSVSCVYKRSRGKSGQKPGLRHQ) lie on the Cytoplasmic side of the membrane. A helical membrane pass occupies residues 362–382 (LGAAFTLLYLLEQLFLPYSHF). Over 383–758 (LTQGYNNWTN…SNPDPVHSEF (376 aa)) the chain is Lumenal. N-linked (GlcNAc...) asparagine glycans are attached at residues N459 and N550. The interval 732–758 (GELNPSNTDSSHSNPPESNPDPVHSEF) is disordered. Residues 735–747 (NPSNTDSSHSNPP) show a composition bias toward polar residues.

The protein belongs to the vitamin K-dependent gamma-carboxylase family. Monomer. May interact with CALU.

It is found in the endoplasmic reticulum membrane. It carries out the reaction 4-carboxy-L-glutamyl-[protein] + 2,3-epoxyphylloquinone + H2O + H(+) = phylloquinol + L-glutamyl-[protein] + CO2 + O2. Mediates the vitamin K-dependent carboxylation of glutamate residues to calcium-binding gamma-carboxyglutamate (Gla) residues with the concomitant conversion of the reduced hydroquinone form of vitamin K to vitamin K epoxide. Catalyzes gamma-carboxylation of various proteins, such as blood coagulation factors (F2, F7, F9 and F10), osteocalcin (BGLAP) or matrix Gla protein (MGP). The chain is Vitamin K-dependent gamma-carboxylase (GGCX) from Homo sapiens (Human).